A 993-amino-acid chain; its full sequence is DNA double-strand break repair Rad50 ATPase (993 aa).

ATP is bound by residues Arg12, 32–38, and Gln133; that span reads NGSGKSS. Coiled coils occupy residues 192–222 and 402–493; these read LENL…LEKL and EELK…LEKT. Positions 452 to 556 constitute a Zinc-hook domain; sequence ENELKEKYED…KLNEIDSFKL (105 aa). 2 residues coordinate Zn(2+): Cys497 and Cys500. Coiled coils occupy residues 570 to 612, 646 to 677, and 702 to 731; these read KVEE…LEND, DSSK…EINL, and ETEK…VLKN.

The protein belongs to the SMC family. RAD50 subfamily. As to quaternary structure, homodimer. Forms a heterotetramer composed of two Mre11 subunits and two Rad50 subunits. Requires Zn(2+) as cofactor.

Functionally, part of the Rad50/Mre11 complex, which is involved in the early steps of DNA double-strand break (DSB) repair. The complex may facilitate opening of the processed DNA ends to aid in the recruitment of HerA and NurA. Rad50 controls the balance between DNA end bridging and DNA resection via ATP-dependent structural rearrangements of the Rad50/Mre11 complex. This chain is DNA double-strand break repair Rad50 ATPase, found in Methanococcus maripaludis (strain DSM 14266 / JCM 13030 / NBRC 101832 / S2 / LL).